The following is a 795-amino-acid chain: MKFSEKWLREWIDPQVSSKILHEQISNSGIEVEHVENFKSEFHGVVVGKIVQCTFHNESNNLKVLKVDIGKKKLLNIICGASNCRNGIKVAVATVGATLPKNITINKKILKGAWSEGMLCSFFELGLFLNDNKIIEFPKETLVGINVYDYFLLEDNIIKVSITSNRPDGLSILGLSRNIAAINDLRISPLKNRLVPAVIQKKINIDIQADKECMNFFGRIIENININVDTPFWMKKKLFFSNVLSENIITNIIHYVLIELGQPLNILDADNINDSIIVRMARHEEDLFLKNNIKISLNENILVFSDSNKILSLPGNINSNIVDVDKNTKNIFLSSYLINRKYISYIIKKMNMNTVLEYHYYGVDPFLQNYAIEYATDLILKICGGVPGPINEKKCNFQIHKNNTIRLHHERLNKIIGFFIDTSVISKILYRLDYQLKFQKTFWDVISPSWRFDILIEEDVIGDILRIYEYNNVHLIPLKEFLNCSKKNELTDSLLKKSAVILINQGYHEVINYGFIDPKIQNLIFPNEENLLLSNPISQDMSCMRLSLWPGLLKNISYNKNRQQKSIRIFESGLCFSIDKRENLGIRQEIFLAAAISGNYIKENWYYNIRKMDFYDLKGDLESILESICQLNEIEFRRKKIHGLHPEQSASIYFRNYLIGSIGAIDPRLEKALNVSSTTFLFEISLNNFSDIKPLKVEEISKFPTVRRDIAILISEEIAAYNVIEQCKIFFINEKVEINLFDIYAYKESHNHKKSLGISFIFQNKKRTFQDNEINLMIDDCIGVLQKKFQAVLRK.

In terms of domain architecture, tRNA-binding spans 39 to 148 (KSEFHGVVVG…KETLVGINVY (110 aa)). One can recognise a B5 domain in the interval 400–475 (HKNNTIRLHH…RIYEYNNVHL (76 aa)). Residues Asp453, Asp459, and Asp463 each coordinate Mg(2+). In terms of domain architecture, FDX-ACB spans 701-794 (SKFPTVRRDI…LQKKFQAVLR (94 aa)).

Belongs to the phenylalanyl-tRNA synthetase beta subunit family. Type 1 subfamily. As to quaternary structure, tetramer of two alpha and two beta subunits. Requires Mg(2+) as cofactor.

The protein localises to the cytoplasm. It carries out the reaction tRNA(Phe) + L-phenylalanine + ATP = L-phenylalanyl-tRNA(Phe) + AMP + diphosphate + H(+). This is Phenylalanine--tRNA ligase beta subunit (pheT) from Buchnera aphidicola subsp. Acyrthosiphon pisum (strain APS) (Acyrthosiphon pisum symbiotic bacterium).